We begin with the raw amino-acid sequence, 361 residues long: Histidinol-phosphate aminotransferase (361 aa).

N6-(pyridoxal phosphate)lysine is present on Lys-221.

It belongs to the class-II pyridoxal-phosphate-dependent aminotransferase family. Histidinol-phosphate aminotransferase subfamily. In terms of assembly, homodimer. It depends on pyridoxal 5'-phosphate as a cofactor.

The catalysed reaction is L-histidinol phosphate + 2-oxoglutarate = 3-(imidazol-4-yl)-2-oxopropyl phosphate + L-glutamate. It participates in amino-acid biosynthesis; L-histidine biosynthesis; L-histidine from 5-phospho-alpha-D-ribose 1-diphosphate: step 7/9. The polypeptide is Histidinol-phosphate aminotransferase (Symbiobacterium thermophilum (strain DSM 24528 / JCM 14929 / IAM 14863 / T)).